A 1936-amino-acid polypeptide reads, in one-letter code: MSLKGSLKLPAAPKDKVRNITKFPVLVEGEVVTNYAQKDVRPIFQKLSYPVFIDLSEGIYLLEKLNLSSNSLIEVTSLGHLNKLKRLILNRNNLIEYSVQGLSSLVYLGLCNNRIDRITDMSDCKKLINIDLSGNRLTCGDGFDHFSKLKSLKVLDLSSNSINCSLIDFQKKILEPLKKSKTLEYLSFENNLIEKKYEEFRLFVINELPKLKYLNWVLISKDERTKASKLDSEGFFSKQLSILSVTPVVHNNNNPNNTVTSAQSSPSLSSVSTPIPTPLNTSSNNIGGGGSGTTTSVSVGSSPTIRGMPSSPNSRSTSFIQRKPSVGANMMPKLNSSLNRSTDFLGKERENHQSTSPSSSSLSISSSSQNNNSNHHHHHPKSIDETPEVLSPFDILQSKVNAENCLSSSQQDLIVNHNNLTTASQILQEIKPTKELTKQETEDYIDILLNELQPNNTDFPTFASVIDQKVYLDLLYRAIIEDAIPEELIEECNKSTTTAATAAAVVDFVTPQLTSLSSSSSSSSTTPPQPQLPPPPPQQQQLDLSLPLPPVNIINMPMDDDELISVPTDESELPVVSTIVPSLVKESSRESLLVTTIDNSTLSTTPPLSSTTPPSPSPKLPTLEETIESVVTAKPSSTTTTATQTNKVSGGSAKEIWTKIDQNTATTPSTPSKNLPKRLPSQSNLINNNNNNNVINVPPPTQSILKPVVGGGSGSTPSSPQMKPMAKPIAKIPAVSTTTNTTPTSTPGSPSKPIMKPVIKKVPAISLKQDQPPIVSPPQPQPQPPIVQQKQQQQQQQQQQQQPQQHFKSEIDKALADIDSWGVIPTAPQAEIKKPIIPQELLSNIQKVESPTEMVENATSKLDEMIMEYHNTSPTSSPTNTRKSITPVQQQQPIQQPIQQPIQQPIQQPIQQPIQQQQQPPIQQIDQVQRMINNETNRIGSMMILGQNISLPNWIVPHDQIQVGSRLGLGSFGDCYTGNAFSIPTILKKLRTQRFTDQFLGQFKNEVMQIRELQHENLVPVSGCCLDNNIYIVHPYYDASNLQTLLFEQSHNNNNNNNNNNNNNNNNNNNNNNNNNHTIISNEFIHRVSLGISKAMTYLHSHDVVHRALKLNNILIDRVSGNVLVRDYGFNFVKDGIFRTGQQSSPYLAPELFNSNCNQYDTNSDQFGFAMILLQLFTRSPLFQDIHVSRITDTILNGVRPEIPDNVPSVFSRLIKACWSADSSARPSFLTISKILSQPFQRIFALSPSTTITKPIVSTGNTTIDSSSSSSGSGSSSVVGSVNSTTIPPVNNSNTGSTGSTSATVKHQFSETGELNRKMILVLERIVSMLSTAAASASTSTISTDSIDSIKRALKALENLSSPENHSSMVGIGLMRSLCFIGTIHLAEIDEQLLRVIYSLSTNEQLSNEFILAGGFTPLSQWVSSSSSSSTSANISLLAIKLLTVLADEQHLHHVRLTGILSSLTQQFVNYTSNNQNGGGGSGGGVINETIILQSVGAMSRILLNQDNQNQFIEEGGVSSLLKMLLNSGNSLSMRALLALCCLISNQNCKSQLHNAGIIPKLMELLSSPQKLLRLHSLKVIETMSKDIEFRKLLIQDNCLSLLVNLLLNSYNGTNTGIGNNTTGNNNDSQESICSILSCIGSLLKNQIALESFYQSNGVDVLIKLIGYNQQIEILESLFPVYCLLINHEQSRLKLVPTINQLVEILSNSTLKESIIISILKCLTLFSSHSSCIEFIEQSMSVSIVSTLLIRNENNYEIKIHSLRFVSSLAKVNNKLAVNIHMMGILQTLVNNLYDKNSMIKDEAISTISWLVSSQECRSIFLQKNVLPMLFDFLSTRNVDIMERLIWAISFFALDDSAQSLMRDNQQCIQFIVNCLDRHEEVFKTLSIKTILILSQKQINHQALKRVGVDFQLQVLSSSSNRSIQLASKKILSLLS.

5 LRR repeats span residues 61-82 (LLEK…GHLN), 83-103 (KLKR…QGLS), 104-125 (SLVY…SDCK), 126-147 (KLIN…DHFS), and 151-173 (SLKV…QKKI). Positions 191 to 230 (NLIEKKYEEFRLFVINELPKLKYLNWVLISKDERTKASKL) constitute an LRRCT domain. Low complexity-rich tracts occupy residues 253–285 (NNPN…SSNN) and 293–302 (TTTSVSVGSS). Disordered stretches follow at residues 253–319 (NNPN…STSF) and 347–386 (KERE…IDET). The segment covering 310-319 (SSPNSRSTSF) has biased composition (polar residues). HEAT repeat units lie at residues 325-368 (SVGA…SSSS) and 439-476 (QETE…DLLY). A compositionally biased stretch (low complexity) spans 353 to 373 (QSTSPSSSSLSISSSSQNNNS). The segment covering 516–526 (LSSSSSSSSTT) has biased composition (low complexity). Disordered stretches follow at residues 516-544 (LSSS…QLDL), 599-620 (NSTL…SPKL), 660-689 (IDQN…INNN), 702-756 (QSIL…PIMK), and 769-809 (QDQP…HFKS). Residues 527 to 538 (PPQPQLPPPPPQ) are compositionally biased toward pro residues. HEAT repeat units lie at residues 574–614 (PVVS…TTPP) and 617–654 (SPKL…GSAK). Over residues 600–612 (STLSTTPPLSSTT) the composition is skewed to low complexity. Polar residues predominate over residues 660–673 (IDQNTATTPSTPSK). The span at 736–756 (STTTNTTPTSTPGSPSKPIMK) shows a compositional bias: low complexity. Residues 774-785 (IVSPPQPQPQPP) are compositionally biased toward pro residues. Low complexity predominate over residues 786–805 (IVQQKQQQQQQQQQQQQPQQ). The 281-residue stretch at 961–1241 (IQVGSRLGLG…ISKILSQPFQ (281 aa)) folds into the Protein kinase domain. Residues 967-975 (LGLGSFGDC) and K988 contribute to the ATP site. Disordered regions lie at residues 1050–1075 (SHNN…NNNN) and 1261–1308 (NTTI…VKHQ). Low complexity-rich tracts occupy residues 1052 to 1075 (NNNN…NNNN), 1266 to 1282 (SSSS…VGSV), and 1291 to 1302 (NNSNTGSTGSTS). 9 HEAT repeats span residues 1317 to 1356 (RKMI…ALKA), 1512 to 1549 (FIEE…NQNC), 1553 to 1590 (LHNA…DIEF), 1598 to 1635 (NCLS…SICS), 1690 to 1728 (QSRL…LFSS), 1739 to 1775 (SMSV…VNNK), 1780 to 1817 (IHMM…SQEC), 1821 to 1858 (FLQK…DDSA), and 1863 to 1900 (RDNQ…KQIN).

This chain is Probable inactive serine/threonine-protein kinase DDB_G0278909, found in Dictyostelium discoideum (Social amoeba).